Here is a 481-residue protein sequence, read N- to C-terminus: UDP-glycosyltransferase 88F3 (481 aa).

UDP-alpha-D-glucose-binding positions include serine 288, 357-358 (WA), 375-383 (HCGWNSVLE), and 397-400 (YAEQ).

The protein belongs to the UDP-glycosyltransferase family.

In terms of biological role, glycosyltransferase that may possess chalcone and dihydrochalcone 2'-O-glucosyltransferase activity. The sequence is that of UDP-glycosyltransferase 88F3 from Pyrus communis (Pear).